Consider the following 233-residue polypeptide: uncharacterized protein (233 aa).

The interval 196–212 (FFYEDYLIFDCRAKRRK) is the nascent chain stimulates ribosomal stalling during translation by interfering with the conformation of the peptidyl transferase center (PTC), and the translating mRNA by adopting a difficult-to-decode structure at the ribosome decoding center.

In terms of biological role, acts as an endogenous target of the ribosome quality control (RQC) pathway. During translation, the nascent chain has a propensity to stall ribosomes, thereby stimulating activation of the RQC pathway. This is an uncharacterized protein from Saccharomyces cerevisiae (strain ATCC 204508 / S288c) (Baker's yeast).